The following is a 303-amino-acid chain: Pycsar effector protein BcPycTIR (303 aa).

Residue 22-138 (KLVGGDKGLA…RRMAKELSKR (117 aa)) participates in a nucleoside 3',5'-cyclic phosphate binding. The TIR-like stretch occupies residues 154–273 (RVFVISSAEA…DMAGVTTIPY (120 aa)).

Purified protein forms large 2-dimensional sheets when incubated with cUMP and shorter filaments in the presence of cCMP.

Its subcellular location is the cytoplasm. The catalysed reaction is NAD(+) + H2O = ADP-D-ribose + nicotinamide + H(+). Its activity is regulated as follows. Activated by cyclic UMP (cUMP) and to a lesser extent by cCMP. Its function is as follows. Pycsar (pyrimidine cyclase system for antiphage resistance) provides immunity against bacteriophage. The pyrimidine cyclase (PycC) synthesizes cyclic nucleotides in response to infection; these serve as specific second messenger signals. The signals activate the adjacent effector, leading to bacterial cell death and abortive phage infection. A clade B Pycsar system. The effector protein of a two-gene Pycsar system. Upon activation by cyclic UMP (cUMP) degrades cellular NAD(+). Expression of this and adjacent uridylate cyclase BcPycC (AC A0A0J5ZXG5) probably confers resistance to bacteriophage. The genes are probably only expressed in response to bacteriophage infection. This protein probably only responds to cUMP (produced by its cognate NTP cyclase). The protein is Pycsar effector protein BcPycTIR of Burkholderia cepacia (Pseudomonas cepacia).